Here is a 539-residue protein sequence, read N- to C-terminus: Tyrosinase (539 aa).

Positions 63, 84, 93, 290, 294, and 333 each coordinate Cu cation. A cross-link (2'-(S-cysteinyl)-histidine (Cys-His)) is located at residues 82 to 84 (CHH).

It belongs to the tyrosinase family. As to quaternary structure, homotetramer. Cu(2+) serves as cofactor. The N-terminus is blocked.

The catalysed reaction is 2 L-dopa + O2 = 2 L-dopaquinone + 2 H2O. It catalyses the reaction L-tyrosine + O2 = L-dopaquinone + H2O. Activated by acidifying treatment at pH 3.0. Its function is as follows. This is a copper-containing oxidase that functions in the formation of pigments such as melanins and other polyphenolic compounds. This is Tyrosinase (melO) from Aspergillus oryzae (strain ATCC 42149 / RIB 40) (Yellow koji mold).